The following is a 201-amino-acid chain: Holliday junction resolvase RecU (201 aa).

The Mg(2+) site is built by T85, D87, E100, and Q119.

The protein belongs to the RecU family. Requires Mg(2+) as cofactor.

Its subcellular location is the cytoplasm. The catalysed reaction is Endonucleolytic cleavage at a junction such as a reciprocal single-stranded crossover between two homologous DNA duplexes (Holliday junction).. Functionally, endonuclease that resolves Holliday junction intermediates in genetic recombination. Cleaves mobile four-strand junctions by introducing symmetrical nicks in paired strands. Promotes annealing of linear ssDNA with homologous dsDNA. Required for DNA repair, homologous recombination and chromosome segregation. The protein is Holliday junction resolvase RecU of Geobacillus thermodenitrificans (strain NG80-2).